A 188-amino-acid chain; its full sequence is Probable nicotinate-nucleotide adenylyltransferase (188 aa).

The protein belongs to the NadD family.

The catalysed reaction is nicotinate beta-D-ribonucleotide + ATP + H(+) = deamido-NAD(+) + diphosphate. The protein operates within cofactor biosynthesis; NAD(+) biosynthesis; deamido-NAD(+) from nicotinate D-ribonucleotide: step 1/1. Functionally, catalyzes the reversible adenylation of nicotinate mononucleotide (NaMN) to nicotinic acid adenine dinucleotide (NaAD). This Acholeplasma laidlawii (strain PG-8A) protein is Probable nicotinate-nucleotide adenylyltransferase.